The following is a 537-amino-acid chain: Bifunctional purine biosynthesis protein PurH (537 aa).

The MGS-like domain occupies 11–158; the sequence is ADIQRVRRAL…KNHAYVGVIV (148 aa).

Belongs to the PurH family.

The catalysed reaction is (6R)-10-formyltetrahydrofolate + 5-amino-1-(5-phospho-beta-D-ribosyl)imidazole-4-carboxamide = 5-formamido-1-(5-phospho-D-ribosyl)imidazole-4-carboxamide + (6S)-5,6,7,8-tetrahydrofolate. The enzyme catalyses IMP + H2O = 5-formamido-1-(5-phospho-D-ribosyl)imidazole-4-carboxamide. The protein operates within purine metabolism; IMP biosynthesis via de novo pathway; 5-formamido-1-(5-phospho-D-ribosyl)imidazole-4-carboxamide from 5-amino-1-(5-phospho-D-ribosyl)imidazole-4-carboxamide (10-formyl THF route): step 1/1. It participates in purine metabolism; IMP biosynthesis via de novo pathway; IMP from 5-formamido-1-(5-phospho-D-ribosyl)imidazole-4-carboxamide: step 1/1. The chain is Bifunctional purine biosynthesis protein PurH from Parvibaculum lavamentivorans (strain DS-1 / DSM 13023 / NCIMB 13966).